Here is a 481-residue protein sequence, read N- to C-terminus: Probable glycine dehydrogenase (decarboxylating) subunit 2 (481 aa).

A disordered region spans residues 1 to 26; it reads MVIFEKTRGKNSPSVMPSKKGDVSNI. At Lys263 the chain carries N6-(pyridoxal phosphate)lysine.

This sequence belongs to the GcvP family. C-terminal subunit subfamily. As to quaternary structure, the glycine cleavage system is composed of four proteins: P, T, L and H. In this organism, the P 'protein' is a heterodimer of two subunits. Pyridoxal 5'-phosphate is required as a cofactor.

It carries out the reaction N(6)-[(R)-lipoyl]-L-lysyl-[glycine-cleavage complex H protein] + glycine + H(+) = N(6)-[(R)-S(8)-aminomethyldihydrolipoyl]-L-lysyl-[glycine-cleavage complex H protein] + CO2. Functionally, the glycine cleavage system catalyzes the degradation of glycine. The P protein binds the alpha-amino group of glycine through its pyridoxal phosphate cofactor; CO(2) is released and the remaining methylamine moiety is then transferred to the lipoamide cofactor of the H protein. This chain is Probable glycine dehydrogenase (decarboxylating) subunit 2, found in Francisella tularensis subsp. mediasiatica (strain FSC147).